Reading from the N-terminus, the 303-residue chain is UDP-3-O-acyl-N-acetylglucosamine deacetylase (303 aa).

His-78, His-237, and Asp-241 together coordinate Zn(2+). The active-site Proton donor is His-264.

The protein belongs to the LpxC family. Zn(2+) is required as a cofactor.

It carries out the reaction a UDP-3-O-[(3R)-3-hydroxyacyl]-N-acetyl-alpha-D-glucosamine + H2O = a UDP-3-O-[(3R)-3-hydroxyacyl]-alpha-D-glucosamine + acetate. It participates in glycolipid biosynthesis; lipid IV(A) biosynthesis; lipid IV(A) from (3R)-3-hydroxytetradecanoyl-[acyl-carrier-protein] and UDP-N-acetyl-alpha-D-glucosamine: step 2/6. Functionally, catalyzes the hydrolysis of UDP-3-O-myristoyl-N-acetylglucosamine to form UDP-3-O-myristoylglucosamine and acetate, the committed step in lipid A biosynthesis. The chain is UDP-3-O-acyl-N-acetylglucosamine deacetylase from Pseudomonas aeruginosa (strain LESB58).